Consider the following 194-residue polypeptide: Imidazoleglycerol-phosphate dehydratase (194 aa).

Belongs to the imidazoleglycerol-phosphate dehydratase family.

The protein resides in the cytoplasm. The catalysed reaction is D-erythro-1-(imidazol-4-yl)glycerol 3-phosphate = 3-(imidazol-4-yl)-2-oxopropyl phosphate + H2O. It functions in the pathway amino-acid biosynthesis; L-histidine biosynthesis; L-histidine from 5-phospho-alpha-D-ribose 1-diphosphate: step 6/9. This chain is Imidazoleglycerol-phosphate dehydratase, found in Listeria monocytogenes serovar 1/2a (strain ATCC BAA-679 / EGD-e).